The primary structure comprises 228 residues: Urease accessory protein UreF (228 aa).

It belongs to the UreF family. UreD, UreF and UreG form a complex that acts as a GTP-hydrolysis-dependent molecular chaperone, activating the urease apoprotein by helping to assemble the nickel containing metallocenter of UreC. The UreE protein probably delivers the nickel.

The protein resides in the cytoplasm. Required for maturation of urease via the functional incorporation of the urease nickel metallocenter. The chain is Urease accessory protein UreF from Yersinia pestis bv. Antiqua (strain Antiqua).